An 81-amino-acid chain; its full sequence is Bursicon (81 aa).

In terms of assembly, heterodimer of burs and pburs. In terms of tissue distribution, central nervous system. Coexpressed with CCAP in most CCAP-specific neurons. Coexpressed with pburs in the large bilateral lateral neurosecretory neurons of the first three unfused abdominal ganglia and in all anterior bilateral cell pairs in the thoracic ganglia.

The protein resides in the secreted. Its function is as follows. Final heterodimeric neurohormone released at the end of the molting cycle, involved in the sclerotization (tanning) of the insect cuticle, melanization and wing spreading. This chain is Bursicon (burs), found in Periplaneta americana (American cockroach).